Consider the following 1489-residue polypeptide: MEGVEDDLSKLLEELSSGVVLNNIQEKLNQSSPKLQSFIDDETGSNAEDVRRVLDAATDTESNYGGGANSITNTPNFNSHRGHQHLQLHTELSLDALRPVSENSPLHKSATRPISTSIRLPRLSVCEDDSSSSSSSSDGDSNSSSDSSDNSSEQSDDDDVHLHLHLHRHHRKVKEDEGDSFESSSESSEQYGSPSTLRRQEALKLEKIMQIQEKKKLLKEKLKEQDELELKEKQELNEITVQKEIKLKDKSNSVQNDIVDSDNNNNNNNNNSITIEEQQQEKQQQQQQHHHHHSTPNKPPKSRSVSISTPDSNIVVAGGNVISKERKRSILASFEEGSPMRSSSRLPSSRGGSIKIKVSKVLEEEMQLQQEFEKQEQLRHSARLSQLIRDLNMSSNLQDQQDQQLRKNENSNNNEGDDNNENVSNDNSSDNENQNINGSILIKEEQQEKIEITTTITTVITPPPPAQEPQHQQQPKILTPEEVEEERIRVLRIERMKDQVFSQLDELEDPLYSNGSRQRNGGGGGASTSAEPSMMQIPLTRLEDTASSSSSPTLQATKTTTTTTTTTTTTTTATLPINNKNLNIQGRPRKDSISDHWDIGRKEQPRRSMTLNIQRVGEDFSVKKAEAKKVNPDLEKILVHISLVDQSHKVICITEDFTVKDVIDLFSEKLGLVQTEFFSLAEVTSDGYDRWLDPNRAVKEAGIKNLSKLTFKIKYFKQPKKLSDSKAVHLYYLQIQQSVVNGTYPCSEAMSYRLSALQFYITFGAFDKDKHIAGFLDHGSLSEFIPSNFFFELTDEVIQKRLFHLHSQIKCSSSIEAKLRYLDLANKIPTFGVTSFQVFDGIRESSIVRQKRHLCVAEDGILISRKDRAGYDFFSYKEIISYQVTTRGLKIQIPHSSITPNTSETMSFDTSSYDQSNNIIDLMMGYKYFIQHDEFIRGIGAPVEQVDLNISLLLPLFQPPKIRTKSDPLRSRLELFKLNYLGLCQNFHTKPISKLIDQIDYILDKEGSFRNRLAFEKVELPSLNLRGSDLSFIADALKDTLNLIIEEGESIVENLNILSLDLSNNPLLATDAFEPLKIIMTCNTIIHLNLKNIGLSNKGVMPLVTIIEKYPNIETLQIGKNRVNESGVRVILRAIKNFNVKIETLGFEETNLTDSGCLIIDKLLSNNKTIKNLNISKNLITEEGFHHIFEGIKRNSLSLQDLNISGNKINSKLMIKFIKWLASSETSIITLNIAKTGLESSFGAELQKFLVGNSCHIKSLDTSYNDLGTSGTKNVIKGIINNQTITELSLCANKISSSGCNDLCQSLELASATCSKLYLRHCGLGSSSLVRIANMLELNKTITTLDLSMNEFSKSSSSAIGTMLEKNETLQEFYLADSSLGAREVESILNGLKNNSTIKKIFLDTNPIGKKGISSLANMLNTNTGLEVITLRHTNLNGKDILELLKQLSTNIPIKIINLTENTLDKITPQIKNAINDQIKRLHTINIQY.

Composition is skewed to polar residues over residues 59–79 and 103–118; these read DTES…NFNS and NSPL…STSI. 4 disordered regions span residues 59–86, 103–197, 252–271, and 277–312; these read DTES…HQHL, NSPL…PSTL, NSVQ…NNNN, and EQQQ…TPDS. Positions 131–153 are enriched in low complexity; it reads SSSSSSSDGDSNSSSDSSDNSSE. The span at 163-172 shows a compositional bias: basic residues; sequence HLHLHRHHRK. Positions 181-195 are enriched in low complexity; the sequence is FESSSESSEQYGSPS. Residues 202–289 adopt a coiled-coil conformation; the sequence is ALKLEKIMQI…QEKQQQQQQH (88 aa). Positions 277–287 are enriched in low complexity; it reads EQQQEKQQQQQ. The segment covering 303 to 312 has biased composition (polar residues); that stretch reads RSVSISTPDS. Residues 356–383 adopt a coiled-coil conformation; the sequence is IKVSKVLEEEMQLQQEFEKQEQLRHSAR. Disordered stretches follow at residues 396 to 435, 459 to 479, and 508 to 569; these read NLQD…ENQN, VITP…KILT, and EDPL…TTTT. Residues 421–435 are compositionally biased toward low complexity; that stretch reads ENVSNDNSSDNENQN. The segment covering 545 to 555 has biased composition (polar residues); it reads TASSSSSPTLQ. A compositionally biased stretch (low complexity) spans 556-569; the sequence is ATKTTTTTTTTTTT. The region spanning 637–934 is the FERM domain; that stretch reads ILVHISLVDQ…GYKYFIQHDE (298 aa). 13 LRR repeats span residues 1017 to 1040, 1053 to 1075, 1087 to 1110, 1111 to 1133, 1167 to 1191, 1196 to 1219, 1254 to 1278, 1282 to 1306, 1339 to 1362, 1367 to 1391, 1395 to 1418, 1428 to 1450, and 1451 to 1474; these read KVEL…LKDT, ENLN…AFEP, HLNL…IEKY, PNIE…VILR, NKTI…IFEG, SLSL…KFIK, SCHI…VIKG, NQTI…LCQS, NKTI…AIGT, NETL…ILNG, NSTI…SLAN, VITL…QLST, and NIPI…IKNA.

This is FERM domain-containing protein C (frmC) from Dictyostelium discoideum (Social amoeba).